We begin with the raw amino-acid sequence, 147 residues long: Lysozyme C-1 (147 aa).

The signal sequence occupies residues Met-1–Gly-18. The C-type lysozyme domain maps to Lys-19–Leu-147. Intrachain disulfides connect Cys-24-Cys-145, Cys-48-Cys-133, Cys-83-Cys-99, and Cys-95-Cys-113. Active-site residues include Glu-53 and Asp-71.

The protein belongs to the glycosyl hydrolase 22 family. Monomer. Expressed in stomach.

The protein resides in the secreted. It catalyses the reaction Hydrolysis of (1-&gt;4)-beta-linkages between N-acetylmuramic acid and N-acetyl-D-glucosamine residues in a peptidoglycan and between N-acetyl-D-glucosamine residues in chitodextrins.. Lysozymes have primarily a bacteriolytic function; those in tissues and body fluids are associated with the monocyte-macrophage system and enhance the activity of immunoagents. This Ovis aries (Sheep) protein is Lysozyme C-1.